The chain runs to 292 residues: 2,3-dihydroxybenzoate decarboxylase (292 aa).

Residue C263 is part of the active site.

The protein belongs to the metallo-dependent hydrolases superfamily. In terms of assembly, homotetramer.

It catalyses the reaction 2,3-dihydroxybenzoate + H(+) = catechol + CO2. Its pathway is aromatic compound metabolism; benzoate degradation via hydroxylation. The sequence is that of 2,3-dihydroxybenzoate decarboxylase from Aspergillus niger.